A 3677-amino-acid chain; its full sequence is Dystrophin (3677 aa).

The tract at residues 1 to 240 (MLWWEEVEDC…YITSLFQVLP (240 aa)) is actin-binding. 2 consecutive Calponin-homology (CH) domains span residues 15 to 119 (DVQK…LHWQ) and 134 to 240 (TNSE…QVLP). Positions 63–72 (PKEKGSTRVH) are ANK2- and ANK-3 binding. Spectrin repeat units lie at residues 342-447 (LDSY…SNLH), 451-557 (MDLQ…LLQD), 560-668 (LKWQ…QISQ), 728-828 (DITE…NWLE), 831-935 (NNII…ELQT), 944-1046 (RYQE…KLEE), 1049-1154 (NKLR…EALK), 1163-1264 (LQKD…TLEE), 1268-1464 (CWHE…LFQK), 1469-1569 (EQRL…QLEK), 1573-1676 (LSRK…NLLL), 1680-1777 (KHME…TGKA), 1779-1875 (IPLK…KALE), 1878-1980 (HQWY…TLHE), 2001-2098 (YLTE…ERQG), 2106-2209 (KWRH…RVEE), 2215-2316 (SEFQ…GELE), 2317-2415 (VHIK…LRTK), 2465-2569 (ADFN…QLNE), 2576-2678 (QWLE…ALEE), 2682-2786 (LLQQ…KKSL), 2800-2922 (KRLH…RKID), and 2927-3032 (RLQE…QLHE). The interaction with SYNM stretch occupies residues 1416–1914 (SDLTSHEISL…PEPRDERKIK (499 aa)). A WW domain is found at 3047–3080 (TSVQGPWERAISPNKVPYYINHETQTTCWDHPKM). The interval 3050–3400 (QGPWERAISP…TVLEGDNMET (351 aa)) is interaction with SYNM. The ZZ-type; degenerate zinc-finger motif lies at 3300–3356 (KHQAKCNICKECPIIGFRYRSLKHFNYDICQSCFFSGRVAKGHKMHYPMVEYCTPTT). Zn(2+)-binding residues include C3305, C3308, C3329, and C3332. A binds to SNTB1 region spans residues 3458-3510 (DDEHLLIQHYCQSLNQDSPLSQPRSPAQILISLESEERGELERILADLEEENR). 3 positions are modified to phosphoserine: S3475, S3482, and S3492. Disordered regions lie at residues 3520-3546 (KQQHEHKGLSPLPSPPEMMPTSPQSPR) and 3595-3677 (EAKV…EDTM). 2 stretches are compositionally biased toward polar residues: residues 3599-3618 (NGTTVSSPSTSLQRSDSSQP) and 3654-3664 (QLNNSFPSSRG). 6 positions are modified to phosphoserine: S3604, S3605, S3609, S3615, S3616, and S3658.

As to quaternary structure, interacts with SYNM. Interacts with the syntrophins SNTG1 and SNTG2. Interacts with KRT19. Component of the dystrophin-associated glycoprotein complex which is composed of three subcomplexes: a cytoplasmic complex comprised of DMD (or UTRN), DTNA and a number of syntrophins, such as SNTB1, SNTB2, SNTG1 and SNTG2, the transmembrane dystroglycan complex, and the sarcoglycan-sarcospan complex. Interacts with DAG1 (betaDAG1) with DMD; the interaction is inhibited by phosphorylation on the PPXY motif of DAG1. Interacts with SYNM; SNTA1 and SNTB1. Interacts with CMYA5. Directly interacts with ANK2 and ANK3; these interactions do not interfere with betaDAG1-binding and are necessary for proper localization in muscle cells. Identified in a dystroglycan complex that contains at least PRX, DRP2, UTRN, DMD and DAG1. Interacts with DTNB. Interacts with PGM5; the interaction is direct. Interacts with NOS1; localizes NOS1 to sarcolemma in muscle cells. Strongly expressed in skeletal muscle and weak expression observed in newborn brain which increases in adult brain.

Its subcellular location is the cell membrane. The protein localises to the sarcolemma. It is found in the cytoplasm. The protein resides in the cytoskeleton. It localises to the postsynaptic cell membrane. In terms of biological role, anchors the extracellular matrix to the cytoskeleton via F-actin. Ligand for dystroglycan. Component of the dystrophin-associated glycoprotein complex which accumulates at the neuromuscular junction (NMJ) and at a variety of synapses in the peripheral and central nervous systems and has a structural function in stabilizing the sarcolemma. Also implicated in signaling events and synaptic transmission. This is Dystrophin (Dmd) from Rattus norvegicus (Rat).